We begin with the raw amino-acid sequence, 156 residues long: Probable succinate transporter subunit YjjB (156 aa).

A run of 4 helical transmembrane segments spans residues 7-27 (WALL…AMVF), 54-74 (FGMN…VIGI), 86-106 (VFTV…TAMI), and 128-148 (FLKA…PGLW).

Belongs to the ThrE exporter (TC 2.A.79) family. In terms of assembly, the transporter is composed of YjjB and YjjP.

It localises to the cell inner membrane. Functionally, involved in succinate export with YjjP. Both proteins are required for export. This is Probable succinate transporter subunit YjjB from Yersinia pseudotuberculosis serotype I (strain IP32953).